Reading from the N-terminus, the 1400-residue chain is Tensin-2 (1400 aa).

A Phorbol-ester/DAG-type zinc finger spans residues 31–79; the sequence is PHSFREKVFRKKTPVCAVCKVTIDGTGVSCRVCKVATHRKCEAKVTSSC. T91 is subject to Phosphothreonine. 2 positions are modified to phosphoserine: S118 and S120. The 173-residue stretch at 122-294 folds into the Phosphatase tensin-type domain; sequence DPLMERRWDL…SYFSGLLSGS (173 aa). C231 acts as the Phosphocysteine intermediate in catalysis. The 127-residue stretch at 299–425 folds into the C2 tensin-type domain; sequence SSPLFLHYVF…ASVEFVFSSS (127 aa). A disordered region spans residues 425–444; the sequence is SPEKVKGNTPRNDPSVSVDY. Polar residues predominate over residues 433–444; that stretch reads TPRNDPSVSVDY. A Phosphoserine modification is found at S455. Position 456 is a phosphotyrosine (Y456). S466 is subject to Phosphoserine. T474 bears the Phosphothreonine mark. S481 is subject to Phosphoserine. Residue Y483 is modified to Phosphotyrosine. Residues 488 to 536 are disordered; it reads RVPRQTPPAPSPELPPPPMLSVSSDSGHSSTLTTEHTAESPGRPPPTAA. The span at 492–506 shows a compositional bias: pro residues; it reads QTPPAPSPELPPPPM. An Omega-N-methylarginine modification is found at R555. Residues 809 to 1114 are disordered; the sequence is CGSPSEGRGY…DVTQPPEHPL (306 aa). Phosphoserine occurs at positions 820, 825, 830, 832, and 835. Composition is skewed to polar residues over residues 898 to 917 and 929 to 940; these read CSAS…SSPV and TRSPSLAPTQRL. Residue T909 is modified to Phosphothreonine. A phosphoserine mark is found at S931, S941, and S972. Position 977 is a phosphothreonine (T977). Phosphoserine occurs at positions 991 and 1003. The segment covering 1046 to 1056 has biased composition (pro residues); that stretch reads PEPPQSSPTPA. Positions 1082 to 1098 are enriched in polar residues; it reads SGQQPSPPARSTNQHVT. S1087 bears the Phosphoserine mark. The 108-residue stretch at 1131 to 1238 folds into the SH2 domain; the sequence is WYKPHLSRDQ…SLPCCLRIPS (108 aa). Phosphothreonine is present on T1173. Position 1238 is a phosphoserine (S1238). Residues 1266–1399 form the PTB domain; the sequence is ACSVLYLTSV…FITKVLLGQR (134 aa).

The protein belongs to the PTEN phosphatase protein family. In terms of assembly, interacts with AXL. Interacts with SYK; leading to its phosphorylation. Interacts with SQSTM1 (via PB1 domain); the interaction leads to sequestration of TNS2 in cytoplasmic aggregates with SQSTM1 and promotes TNS2 ubiquitination and proteasomal degradation. In terms of processing, ubiquitinated following sequestration in cytoplasmic aggregates with SQSTM1, leading to proteasomal degradation. In the adult kidney, expressed mainly in glomeruli (at protein level). In the newborn kidney, localizes on the basal surface of podocytes along the glomerular basement membrane and not in endothelial cells. Low expression levels in anabolic skeletal muscles.

The protein resides in the cell junction. It is found in the focal adhesion. Its subcellular location is the cell membrane. The protein localises to the cytoplasm. It carries out the reaction O-phospho-L-tyrosyl-[protein] + H2O = L-tyrosyl-[protein] + phosphate. In terms of biological role, tyrosine-protein phosphatase which regulates cell motility, proliferation and muscle-response to insulin. Phosphatase activity is mediated by binding to phosphatidylinositol-3,4,5-triphosphate (PtdIns(3,4,5)P3) via the SH2 domain. In muscles and under catabolic conditions, dephosphorylates IRS1 leading to its degradation and muscle atrophy. Negatively regulates PI3K-AKT pathway activation. Dephosphorylates nephrin NPHS1 in podocytes which affects mTORC1 complex activity. Under normal glucose conditions, NPHS1 outcompetes IRS1 for binding to phosphatidylinositol 3-kinase (PI3K) which balances mTORC1 activity but high glucose conditions lead to up-regulation of TNS2, increased NPHS1 dephosphorylation and activation of mTORC1, contributing to podocyte hypertrophy and proteinuria. Required for correct podocyte morphology, podocyte-glomerular basement membrane interaction and integrity of the glomerular filtration barrier. Enhances RHOA activation in the presence of DLC1. Plays a role in promoting DLC1-dependent remodeling of the extracellular matrix. This chain is Tensin-2 (Tns2), found in Mus musculus (Mouse).